The following is a 165-amino-acid chain: Natriuretic peptide Na-NP (165 aa).

Positions 1–25 (MVGLSRLAGGGLLLVLALLPLALDG) are cleaved as a signal peptide. The propeptide occupies 26-83 (KPAPEALHKPPTGLRTSLAALRILGYLRPDSKQSRAARDRMLHPEQQVGGGGDSRPLQ). Basic and acidic residues predominate over residues 56 to 68 (SKQSRAARDRMLH). Disordered regions lie at residues 56-100 (SKQS…QKID) and 135-165 (PDSKRSRATRDRMLHPEQQVGGGGGGGSRVI). Cysteines 94 and 110 form a disulfide. The propeptide occupies 129–165 (ILEYLRPDSKRSRATRDRMLHPEQQVGGGGGGGSRVI). Residues 135 to 149 (PDSKRSRATRDRMLH) show a composition bias toward basic and acidic residues. The span at 154–165 (VGGGGGGGSRVI) shows a compositional bias: gly residues.

The protein belongs to the natriuretic peptide family. As to expression, expressed by the venom gland.

Its subcellular location is the secreted. Its function is as follows. Natriuretic peptide that dose-dependently induces the rapid relaxation of rat aortic strips phenylephrine-precontracted. Acts by stimulating cGMP production in a dose-dependent manner (by probably activating NPR1 and/or NPR2). May also show potent hypotensive effects. This is Natriuretic peptide Na-NP from Naja atra (Chinese cobra).